Consider the following 527-residue polypeptide: UDP-glucuronosyltransferase 2A3 (527 aa).

An N-terminal signal peptide occupies residues 1–23 (MRSDKSALVFLLLQLFCVGCGFC). The Extracellular segment spans residues 24-491 (GKVLVWPCDM…TWFQHYSIDV (468 aa)). Asparagine 313 carries N-linked (GlcNAc...) asparagine glycosylation. A helical transmembrane segment spans residues 492–512 (IGFLLACVATAIFLFTKCFLF). The Cytoplasmic portion of the chain corresponds to 513–527 (SCQKFNKTRKIEKRE).

The protein belongs to the UDP-glycosyltransferase family.

Its subcellular location is the membrane. The catalysed reaction is glucuronate acceptor + UDP-alpha-D-glucuronate = acceptor beta-D-glucuronoside + UDP + H(+). Its function is as follows. UDP-glucuronosyltransferases catalyze phase II biotransformation reactions in which lipophilic substrates are conjugated with glucuronic acid to increase water solubility and enhance excretion. They are of major importance in the conjugation and subsequent elimination of potentially toxic xenobiotics and endogenous compounds. The sequence is that of UDP-glucuronosyltransferase 2A3 (UGT2A3) from Homo sapiens (Human).